Consider the following 155-residue polypeptide: Small ribosomal subunit protein uS7c (155 aa).

The protein belongs to the universal ribosomal protein uS7 family. In terms of assembly, part of the 30S ribosomal subunit.

The protein resides in the plastid. It localises to the chloroplast. In terms of biological role, one of the primary rRNA binding proteins, it binds directly to 16S rRNA where it nucleates assembly of the head domain of the 30S subunit. This chain is Small ribosomal subunit protein uS7c, found in Beta vulgaris (Sugar beet).